We begin with the raw amino-acid sequence, 198 residues long: Ribosome maturation factor RimP (198 aa).

It belongs to the RimP family.

It is found in the cytoplasm. Functionally, required for maturation of 30S ribosomal subunits. The polypeptide is Ribosome maturation factor RimP (Rhizobium etli (strain CIAT 652)).